A 403-amino-acid chain; its full sequence is Tryptophan synthase beta chain (403 aa).

At Lys-87 the chain carries N6-(pyridoxal phosphate)lysine.

Belongs to the TrpB family. In terms of assembly, tetramer of two alpha and two beta chains. Pyridoxal 5'-phosphate is required as a cofactor.

It catalyses the reaction (1S,2R)-1-C-(indol-3-yl)glycerol 3-phosphate + L-serine = D-glyceraldehyde 3-phosphate + L-tryptophan + H2O. It functions in the pathway amino-acid biosynthesis; L-tryptophan biosynthesis; L-tryptophan from chorismate: step 5/5. Its function is as follows. The beta subunit is responsible for the synthesis of L-tryptophan from indole and L-serine. The chain is Tryptophan synthase beta chain from Shewanella loihica (strain ATCC BAA-1088 / PV-4).